A 639-amino-acid polypeptide reads, in one-letter code: Mediator of RNA polymerase II transcription subunit 17 (639 aa).

Residues 32–43 (ASATVTTNGTTA) show a composition bias toward polar residues. Disordered regions lie at residues 32 to 68 (ASAT…EEHS) and 130 to 159 (MGDA…NNDS). The segment covering 48–57 (DSGSQQSVSS) has biased composition (low complexity). Over residues 58 to 68 (APIQQNSEEHS) the composition is skewed to polar residues. Residues 245-271 (WKLRSLEDSKALLKENYAKLQKSLEVE) are a coiled coil.

This sequence belongs to the Mediator complex subunit 17 family. As to quaternary structure, component of the Mediator complex.

It localises to the nucleus. Its function is as follows. Component of the Mediator complex, a coactivator involved in the regulated transcription of nearly all RNA polymerase II-dependent genes. Mediator functions as a bridge to convey information from gene-specific regulatory proteins to the basal RNA polymerase II transcription machinery. Mediator is recruited to promoters by direct interactions with regulatory proteins and serves as a scaffold for the assembly of a functional preinitiation complex with RNA polymerase II and the general transcription factors. The protein is Mediator of RNA polymerase II transcription subunit 17 (SRB4) of Eremothecium gossypii (strain ATCC 10895 / CBS 109.51 / FGSC 9923 / NRRL Y-1056) (Yeast).